The sequence spans 737 residues: Catalase-peroxidase (737 aa).

A disordered region spans residues 1 to 29 (MTDSPDATTGGCPVAHGDRLPHPTQGGAN). The segment at residues 101–227 (WHSAGTYRVS…LGATHMGLIY (127 aa)) is a cross-link (tryptophyl-tyrosyl-methioninium (Trp-Tyr) (with M-253)). Histidine 102 acts as the Proton acceptor in catalysis. Residues 227-253 (YVNPEGPEGKPDPVAAARDIRETFGRM) constitute a cross-link (tryptophyl-tyrosyl-methioninium (Tyr-Met) (with W-101)). Histidine 268 is a binding site for heme b.

Belongs to the peroxidase family. Peroxidase/catalase subfamily. As to quaternary structure, homodimer or homotetramer. Requires heme b as cofactor. In terms of processing, formation of the three residue Trp-Tyr-Met cross-link is important for the catalase, but not the peroxidase activity of the enzyme.

It carries out the reaction H2O2 + AH2 = A + 2 H2O. The catalysed reaction is 2 H2O2 = O2 + 2 H2O. Functionally, bifunctional enzyme with both catalase and broad-spectrum peroxidase activity. In Saccharopolyspora erythraea (strain ATCC 11635 / DSM 40517 / JCM 4748 / NBRC 13426 / NCIMB 8594 / NRRL 2338), this protein is Catalase-peroxidase.